The following is a 382-amino-acid chain: uncharacterized protein (382 aa).

Helical transmembrane passes span 8–28, 41–61, 73–93, 94–114, 133–153, 157–177, 208–228, 274–294, 325–345, and 349–369; these read VLLL…LNTL, WQVG…TLIA, SYHC…LTVD, FWSW…IWVI, AAYM…LGIV, LLSV…PLLF, GCII…LYLS, VVIL…ALFI, ALLM…SLLM, and SDNL…MMLL.

It belongs to the major facilitator superfamily. YcaD (TC 2.A.1.26) family.

It localises to the cell inner membrane. This is an uncharacterized protein from Yersinia pseudotuberculosis serotype O:3 (strain YPIII).